Consider the following 210-residue polypeptide: Thymidylate kinase (210 aa).

An ATP-binding site is contributed by 10 to 17 (GGEGAGKS).

This sequence belongs to the thymidylate kinase family.

The enzyme catalyses dTMP + ATP = dTDP + ADP. Its function is as follows. Phosphorylation of dTMP to form dTDP in both de novo and salvage pathways of dTTP synthesis. The polypeptide is Thymidylate kinase (Magnetococcus marinus (strain ATCC BAA-1437 / JCM 17883 / MC-1)).